We begin with the raw amino-acid sequence, 403 residues long: uncharacterized protein (403 aa).

Residues 1 to 26 form the signal peptide; it reads MYKFKTNLFLVIYFIAIFSIESSISS. Residues 27 to 381 are Extracellular-facing; sequence FNTEINSNSN…DSDNSSFGIS (355 aa). N58, N90, N93, N124, N137, N371, and N375 each carry an N-linked (GlcNAc...) asparagine glycan. The chain crosses the membrane as a helical span at residues 382-402; that stretch reads IQKYLNSFLNSFIIILIINII. Residue I403 is a topological domain, cytoplasmic.

The protein localises to the membrane. This is an uncharacterized protein from Dictyostelium discoideum (Social amoeba).